The following is a 99-amino-acid chain: Co-chaperonin GroES (99 aa).

The protein belongs to the GroES chaperonin family. In terms of assembly, heptamer of 7 subunits arranged in a ring. Interacts with the chaperonin GroEL.

Its subcellular location is the cytoplasm. In terms of biological role, together with the chaperonin GroEL, plays an essential role in assisting protein folding. The GroEL-GroES system forms a nano-cage that allows encapsulation of the non-native substrate proteins and provides a physical environment optimized to promote and accelerate protein folding. GroES binds to the apical surface of the GroEL ring, thereby capping the opening of the GroEL channel. The sequence is that of Co-chaperonin GroES from Rhodococcus erythropolis (strain PR4 / NBRC 100887).